The chain runs to 389 residues: 1-deoxy-D-xylulose 5-phosphate reductoisomerase (389 aa).

NADPH is bound by residues Thr10, Gly11, Ser12, Ile13, Asn38, and Asn122. Lys123 is a 1-deoxy-D-xylulose 5-phosphate binding site. Residue Glu124 participates in NADPH binding. Asp148 lines the Mn(2+) pocket. Residues Ser149, Glu150, Ser173, and His196 each coordinate 1-deoxy-D-xylulose 5-phosphate. Glu150 lines the Mn(2+) pocket. Gly202 contacts NADPH. 1-deoxy-D-xylulose 5-phosphate contacts are provided by Ser209, Asn214, Lys215, and Glu218. Glu218 is a Mn(2+) binding site.

This sequence belongs to the DXR family. Mg(2+) is required as a cofactor. Mn(2+) serves as cofactor.

The catalysed reaction is 2-C-methyl-D-erythritol 4-phosphate + NADP(+) = 1-deoxy-D-xylulose 5-phosphate + NADPH + H(+). Its pathway is isoprenoid biosynthesis; isopentenyl diphosphate biosynthesis via DXP pathway; isopentenyl diphosphate from 1-deoxy-D-xylulose 5-phosphate: step 1/6. Functionally, catalyzes the NADPH-dependent rearrangement and reduction of 1-deoxy-D-xylulose-5-phosphate (DXP) to 2-C-methyl-D-erythritol 4-phosphate (MEP). The protein is 1-deoxy-D-xylulose 5-phosphate reductoisomerase of Wolbachia sp. subsp. Brugia malayi (strain TRS).